Reading from the N-terminus, the 186-residue chain is PRA1 family protein G2 (186 aa).

Transmembrane regions (helical) follow at residues 66–86, 87–107, 119–139, and 142–162; these read YFFVNYTIIVSTCAAFALITA, SPVALIVVGAIIALWLIFHFF, VGDRTVLLFLVLASVWAIWFT, and AVNLAVGVSVGLLLCIIHAVF.

This sequence belongs to the PRA1 family. In terms of tissue distribution, expressed in roots and trichomes.

The protein resides in the endoplasmic reticulum membrane. Functionally, may be involved in both secretory and endocytic intracellular trafficking in the endosomal/prevacuolar compartments. The protein is PRA1 family protein G2 (PRA1G2) of Arabidopsis thaliana (Mouse-ear cress).